A 50-amino-acid polypeptide reads, in one-letter code: Large ribosomal subunit protein bL33B (50 aa).

This sequence belongs to the bacterial ribosomal protein bL33 family.

This chain is Large ribosomal subunit protein bL33B (rpmG2), found in Enterococcus faecalis (strain ATCC 700802 / V583).